Reading from the N-terminus, the 471-residue chain is Tumor necrosis factor receptor superfamily member 1A (471 aa).

Residues 1–29 (MGLPTVPGLLLPLVLPALLADVYPAGVQG) form the signal peptide. Over 30–210 (LVPHPGDLEK…GKDSQDPGTT (181 aa)) the chain is Extracellular. 4 TNFR-Cys repeats span residues 43-82 (PCPQ…TDCR), 83-125 (VCAP…DTVC), 126-166 (GCRK…DTIC), and 167-195 (HCHM…KLCP). 7 disulfide bridges follow: cysteine 44–cysteine 58, cysteine 59–cysteine 72, cysteine 62–cysteine 81, cysteine 84–cysteine 99, cysteine 102–cysteine 117, cysteine 105–cysteine 125, and cysteine 127–cysteine 143. A glycan (N-linked (GlcNAc...) asparagine) is linked at asparagine 54. 2 N-linked (GlcNAc...) asparagine glycosylation sites follow: asparagine 145 and asparagine 151. Disulfide bonds link cysteine 146–cysteine 158, cysteine 149–cysteine 166, cysteine 168–cysteine 179, cysteine 182–cysteine 194, and cysteine 185–cysteine 190. The chain crosses the membrane as a helical span at residues 211 to 233 (VLLPLVIVFGLCLASFASVVLAC). The Cytoplasmic portion of the chain corresponds to 234–471 (RYQRWKPKLY…RLASEPRLLW (238 aa)). Positions 340-360 (TPGPPASTHLCTPVQKWEASA) are N-SMase activation domain (NSD). Residues 372-457 (PATLYAVVDG…GCLENIEEAL (86 aa)) form the Death domain.

In terms of assembly, binding of TNF to the extracellular domain leads to homotrimerization. The aggregated death domains provide a novel molecular interface that interacts specifically with the death domain of TRADD. Various TRADD-interacting proteins such as TRAFS, RIPK1 and possibly FADD, are recruited to the complex by their association with TRADD. This complex activates at least two distinct signaling cascades, apoptosis and NF-kappa-B signaling. Interacts with BAG4, BABAM2, FEM1B, GRB2, SQSTM1 and TRPC4AP. Interacts directly with NOL3 (via CARD domain); inhibits TNF-signaling pathway. Interacts with SH3RF2, TRADD and RIPK1. SH3RF2 facilitates the recruitment of RIPK1 and TRADD to TNFRSF1A in a TNF-alpha-dependent process. Interacts with PGLYRP1; this interaction is important for cell death induction. Interacts (via death domain) with MADD (via death domain).

It localises to the cell membrane. It is found in the golgi apparatus membrane. Its function is as follows. Receptor for TNFSF2/TNF-alpha and homotrimeric TNFSF1/lymphotoxin-alpha. The adapter molecule FADD recruits caspase-8 to the activated receptor. The resulting death-inducing signaling complex (DISC) performs caspase-8 proteolytic activation which initiates the subsequent cascade of caspases (aspartate-specific cysteine proteases) mediating apoptosis. The sequence is that of Tumor necrosis factor receptor superfamily member 1A (TNFRSF1A) from Bos taurus (Bovine).